The sequence spans 469 residues: uncharacterized protein (469 aa).

The HTH gntR-type domain occupies threonine 13 to valine 81. Positions lysine 41–glutamate 60 form a DNA-binding region, H-T-H motif. Lysine 309 is modified (N6-(pyridoxal phosphate)lysine).

This sequence in the C-terminal section; belongs to the class-I pyridoxal-phosphate-dependent aminotransferase family. It depends on pyridoxal 5'-phosphate as a cofactor.

This is an uncharacterized protein from Bacillus subtilis (strain 168).